The chain runs to 283 residues: 2-dehydro-3-deoxyphosphooctonate aldolase (283 aa).

It belongs to the KdsA family.

It is found in the cytoplasm. The catalysed reaction is D-arabinose 5-phosphate + phosphoenolpyruvate + H2O = 3-deoxy-alpha-D-manno-2-octulosonate-8-phosphate + phosphate. It participates in carbohydrate biosynthesis; 3-deoxy-D-manno-octulosonate biosynthesis; 3-deoxy-D-manno-octulosonate from D-ribulose 5-phosphate: step 2/3. It functions in the pathway bacterial outer membrane biogenesis; lipopolysaccharide biosynthesis. The chain is 2-dehydro-3-deoxyphosphooctonate aldolase from Vibrio cholerae serotype O1 (strain ATCC 39315 / El Tor Inaba N16961).